Consider the following 537-residue polypeptide: MAKQIIFGEKVRVSLKKGVDTLANTVRVTLGPKGHPVALERKWGAPTVIDDGVTIARDIELPDAFENMGAQLVKEAATRTSDAAGDGTTTSIVLAQALINEAFKNIAAGAEPINLKRGIEKAVAALKAQLRKNSTPVKGKQQIVQVATITGKDPEIGNLIADVMDKVGKDGVITIEESRGLRYETSYVEGMQFDRGYISAYFVTDPGRMESIMEDATILMTDRKIETVAELLPALEKILQISKNLVIVAENVEAEALATLVVNKLRGNLNILAVKAPGYGDRQKAMLEDMAILTGGHVISKEAGRKLDSVTEADLGHARRVVSNKDKTTIIDGEGSAEAIKNRIKQIKAQIEETESAFDREKLQERQAALVGGVAVIAVGAATETEMKERKARVEDALAATRAAIEEGILPGGGTGLLNALPCLDALKLEGDEATGVSIVRKALIEPVRWIATNAGKDGNVIVDKVKNSPVGHGYNAEKDVFGDMAEMGIIDPTMVVRSALENASSIANMVLITDSLVADIQDKNPAPPMPEAPGMY.

ATP contacts are provided by residues threonine 29–proline 32, aspartate 86–threonine 90, glycine 413, and aspartate 492.

The protein belongs to the chaperonin (HSP60) family. As to quaternary structure, forms a cylinder of 14 subunits composed of two heptameric rings stacked back-to-back. Interacts with the co-chaperonin GroES.

It localises to the cytoplasm. The enzyme catalyses ATP + H2O + a folded polypeptide = ADP + phosphate + an unfolded polypeptide.. Functionally, together with its co-chaperonin GroES, plays an essential role in assisting protein folding. The GroEL-GroES system forms a nano-cage that allows encapsulation of the non-native substrate proteins and provides a physical environment optimized to promote and accelerate protein folding. The polypeptide is Chaperonin GroEL (Dehalococcoides mccartyi (strain ATCC BAA-2266 / KCTC 15142 / 195) (Dehalococcoides ethenogenes (strain 195))).